The chain runs to 367 residues: MTASRRTLMVMAGGTGGHVFPGLAVAHRMEAAGWRVVWLGNPAGMEATLVPKHGIPMEYVRFGGLRGKGLKTKLALPFNLLRACAQSLAALRRVRPDVVLGMGGYITFPAGVMTALSGRPLVLHEQNSIAGLANKVLAKLAKRVLVAFPGALPHAEWTGNPIRAELARTEPPKARYAARSGPLNVLVVGGSLGAAALNEVVPRALALLAPGERPRVVHQAGAKHIDALKANYEAAGFAAGDDVRLVPFIDDMAAAYAAADLVICRSGAMTVSEIAAVGVAALFVPFPYAVDDHQTTNAAFLADAGAAVLVQQRDLSAELLADWLRGQSRASLAAMAERSRSLAKPEATDEVARVCATVAGANLESLQ.

Residues 15-17 (TGG), Asn-127, Arg-163, Ser-191, Ile-249, and Gln-294 contribute to the UDP-N-acetyl-alpha-D-glucosamine site.

Belongs to the glycosyltransferase 28 family. MurG subfamily.

The protein localises to the cell inner membrane. It catalyses the reaction di-trans,octa-cis-undecaprenyl diphospho-N-acetyl-alpha-D-muramoyl-L-alanyl-D-glutamyl-meso-2,6-diaminopimeloyl-D-alanyl-D-alanine + UDP-N-acetyl-alpha-D-glucosamine = di-trans,octa-cis-undecaprenyl diphospho-[N-acetyl-alpha-D-glucosaminyl-(1-&gt;4)]-N-acetyl-alpha-D-muramoyl-L-alanyl-D-glutamyl-meso-2,6-diaminopimeloyl-D-alanyl-D-alanine + UDP + H(+). The protein operates within cell wall biogenesis; peptidoglycan biosynthesis. Functionally, cell wall formation. Catalyzes the transfer of a GlcNAc subunit on undecaprenyl-pyrophosphoryl-MurNAc-pentapeptide (lipid intermediate I) to form undecaprenyl-pyrophosphoryl-MurNAc-(pentapeptide)GlcNAc (lipid intermediate II). This Burkholderia multivorans (strain ATCC 17616 / 249) protein is UDP-N-acetylglucosamine--N-acetylmuramyl-(pentapeptide) pyrophosphoryl-undecaprenol N-acetylglucosamine transferase.